Reading from the N-terminus, the 410-residue chain is Protein translocase subunit SecY 2 (410 aa).

The next 10 helical transmembrane spans lie at Ile-2–Leu-22, Phe-45–Leu-65, Leu-94–Thr-114, Phe-125–Gly-145, Leu-147–Val-167, Trp-188–Phe-208, Val-241–Phe-261, Gly-284–Ile-304, Tyr-339–Ala-359, and Leu-366–Gly-386.

It belongs to the SecY/SEC61-alpha family. As to quaternary structure, component of the Sec protein translocase complex. Heterotrimer consisting of SecY, SecE and SecG subunits. The heterotrimers can form oligomers, although 1 heterotrimer is thought to be able to translocate proteins. Interacts with the ribosome. Interacts with SecDF, and other proteins may be involved. Interacts with SecA.

The protein localises to the cell membrane. Its function is as follows. The central subunit of the protein translocation channel SecYEG. Consists of two halves formed by TMs 1-5 and 6-10. These two domains form a lateral gate at the front which open onto the bilayer between TMs 2 and 7, and are clamped together by SecE at the back. The channel is closed by both a pore ring composed of hydrophobic SecY resides and a short helix (helix 2A) on the extracellular side of the membrane which forms a plug. The plug probably moves laterally to allow the channel to open. The ring and the pore may move independently. This is Protein translocase subunit SecY 2 from Lactobacillus kefiranofaciens subsp. kefiranofaciens.